We begin with the raw amino-acid sequence, 296 residues long: Cytidine deaminase (296 aa).

CMP/dCMP-type deaminase domains follow at residues 47–167 (AESE…FGPS) and 186–296 (DSSD…LDPE). A substrate-binding site is contributed by 88-90 (NME). Residue H101 participates in Zn(2+) binding. Residue E103 is the Proton donor of the active site. Zn(2+) is bound by residues C128 and C131.

The protein belongs to the cytidine and deoxycytidylate deaminase family. Homodimer. The cofactor is Zn(2+).

It carries out the reaction cytidine + H2O + H(+) = uridine + NH4(+). It catalyses the reaction 2'-deoxycytidine + H2O + H(+) = 2'-deoxyuridine + NH4(+). This enzyme scavenges exogenous and endogenous cytidine and 2'-deoxycytidine for UMP synthesis. The protein is Cytidine deaminase of Shewanella sediminis (strain HAW-EB3).